A 681-amino-acid polypeptide reads, in one-letter code: Probable glutamate carboxypeptidase LAMP1 (681 aa).

At M1–S6 the chain is on the cytoplasmic side. A helical; Signal-anchor for type II membrane protein transmembrane segment spans residues L7–S24. Topologically, residues P25–I681 are extracellular. 4 N-linked (GlcNAc...) asparagine glycosylation sites follow: N42, N140, N166, and N299. The interval S241–L527 is catalytic. H333 and D343 together coordinate Zn(2+). The active-site Nucleophile is E380. Residues E381 and D409 each coordinate Zn(2+). N441 carries N-linked (GlcNAc...) asparagine glycosylation. A Zn(2+)-binding site is contributed by H493. N536 carries N-linked (GlcNAc...) asparagine glycosylation.

Belongs to the peptidase M28 family. M28B subfamily. The cofactor is Zn(2+).

It is found in the endoplasmic reticulum membrane. The enzyme catalyses Release of an unsubstituted, C-terminal glutamyl residue, typically from Ac-Asp-Glu or folylpoly-gamma-glutamates.. Its function is as follows. Acts in association with AMP1 to suppress ectopic stem cell niche formation in the shoot apical meristem (SAM) independently of cytokinin signaling pathway. This is Probable glutamate carboxypeptidase LAMP1 from Arabidopsis thaliana (Mouse-ear cress).